The chain runs to 500 residues: Cytochrome P450 monooxygenase astJ (500 aa).

Cysteine 440 lines the heme pocket.

The protein belongs to the cytochrome P450 family. Heme is required as a cofactor.

The protein operates within secondary metabolite biosynthesis; terpenoid biosynthesis. Functionally, cytochrome P450 monooxygenase; part of the gene cluster that mediates the biosynthesis of astellolides, drimane-type sesquiterpene esters that show antimicrobial, anti-inflammatory, and anti-tumor activities. The first step in astellolide biosynthesis is performed by the sesquiterpene cyclase astC that catalyzes the formation of drimanyl pyrophosphate from farnesyl pyrophosphate. Drimanyl pyrophosphate is then dephosphorylated by the sesquiterpene phosphatase astI to produce drimanyl monophosphate which is further dephosphorylated to drim-8-ene-11-ol by atsK. Drim-8-ene-11-ol is converted to confertifolin, probably by the cytochrome P450 monooxygenase astD and/or the dehydrogenase astE. The cytochrome P450 monooxygenases astB, astF and astJ then hydroxylate confertifolin at C6, C14, or C15 to form trihydroxy confertifolin. The nonribosomal peptide synthetase astA catalyzes ester bond formation between trihydroxy contifolin and benzoic acid (BA) or 4-hydroxy benzoic acid (4HBA), leading to the formation of dideacetyl astellolides A and B, respectively. Finally, the O-acetyltransferase astG converts dideacetyl astellolides A and B into deacetyl astellolides A and B. The polypeptide is Cytochrome P450 monooxygenase astJ (Aspergillus oryzae (strain ATCC 42149 / RIB 40) (Yellow koji mold)).